The following is a 108-amino-acid chain: Small ribosomal subunit protein bS16 (108 aa).

The interval 82–108 is disordered; that stretch reads ESKFSKNTQTENKKPVSKKTTKKSKDN. Basic residues predominate over residues 96 to 108; sequence PVSKKTTKKSKDN.

It belongs to the bacterial ribosomal protein bS16 family.

The sequence is that of Small ribosomal subunit protein bS16 from Mycoplasma capricolum subsp. capricolum (strain California kid / ATCC 27343 / NCTC 10154).